Reading from the N-terminus, the 428-residue chain is Histidinol dehydrogenase (428 aa).

Substrate-binding residues include Ser-234, Gln-256, and His-259. Zn(2+) contacts are provided by Gln-256 and His-259. Active-site proton acceptor residues include Glu-324 and His-325. His-325, Asp-358, Glu-412, and His-417 together coordinate substrate. A Zn(2+)-binding site is contributed by Asp-358. His-417 serves as a coordination point for Zn(2+).

This sequence belongs to the histidinol dehydrogenase family. Requires Zn(2+) as cofactor.

The catalysed reaction is L-histidinol + 2 NAD(+) + H2O = L-histidine + 2 NADH + 3 H(+). It functions in the pathway amino-acid biosynthesis; L-histidine biosynthesis; L-histidine from 5-phospho-alpha-D-ribose 1-diphosphate: step 9/9. Functionally, catalyzes the sequential NAD-dependent oxidations of L-histidinol to L-histidinaldehyde and then to L-histidine. In Pelagibacter ubique (strain HTCC1062), this protein is Histidinol dehydrogenase.